Consider the following 396-residue polypeptide: Elongation factor Tu 2 (396 aa).

The tr-type G domain occupies 10 to 206; sequence KPHCNIGTIG…TVDAYIPQPD (197 aa). Positions 19-26 are G1; that stretch reads GHVDHGKT. Residue 19–26 participates in GTP binding; it reads GHVDHGKT. Thr-26 contributes to the Mg(2+) binding site. The tract at residues 60-64 is G2; sequence GITIN. The tract at residues 81–84 is G3; it reads DCPG. GTP is bound by residues 81-85 and 136-139; these read DCPGH and NKVD. The segment at 136–139 is G4; the sequence is NKVD. The interval 174-176 is G5; the sequence is SAK.

It belongs to the TRAFAC class translation factor GTPase superfamily. Classic translation factor GTPase family. EF-Tu/EF-1A subfamily. As to quaternary structure, monomer.

It localises to the cytoplasm. It carries out the reaction GTP + H2O = GDP + phosphate + H(+). Its function is as follows. GTP hydrolase that promotes the GTP-dependent binding of aminoacyl-tRNA to the A-site of ribosomes during protein biosynthesis. This Caulobacter sp. (strain K31) protein is Elongation factor Tu 2.